We begin with the raw amino-acid sequence, 202 residues long: Matrix protein (202 aa).

Residues 35-38 (PPEY) carry the PPXY motif motif. The interval 115–151 (KLRRTLIFQWADSRGPLEGEELEYSQEITWDDDTEFV) is essential for glycoprotein binding.

It belongs to the lyssavirus matrix protein family. As to quaternary structure, homomultimer. Interacts with nucleoprotein and with the cytoplasmic domain of glycoprotein. Interacts with host ATP6V1A; this interaction plays an important role in virion uncoating after viral entry.

It is found in the virion membrane. Its subcellular location is the host endomembrane system. It localises to the host cytoplasm. In terms of biological role, plays a major role in assembly, budding and uncoating of virion after membrane fusion. Completely covers the ribonucleoprotein coil and keep it in condensed bullet-shaped form. Inhibits viral transcription and stimulates replication. Plays a major role in early induction of TRAIL-mediated apoptosis in infected neurons. Inhibits the integrated stress response (ISR) in the infected cell by blocking the formation of stress granules. The sequence is that of Matrix protein (M) from Homo sapiens (Human).